The primary structure comprises 2172 residues: DExH-box ATP-dependent RNA helicase DExH13 (2172 aa).

Residues 20 to 83 form a disordered region; that stretch reads YKVNSSLVLN…KSKKKKERCD (64 aa). Over residues 30 to 73 the composition is skewed to basic and acidic residues; it reads SDERRRDTHESSGEPESLRGRIDPKSFGDRVVRGRPHELDERLN. In terms of domain architecture, Helicase ATP-binding 1 spans 515–698; that stretch reads GTALFKADNI…FLRVDLKNGL (184 aa). 528-535 contributes to the ATP binding site; that stretch reads APTGAGKT. The DEIH box motif lies at 640-643; that stretch reads DEIH. One can recognise a Helicase C-terminal 1 domain in the interval 742–946; the sequence is GKHQVLIFVH…NAREACHWLG (205 aa). Residues 1007 to 1308 form the SEC63 1 domain; sequence TDLGRIASYY…KWLDSPTVLP (302 aa). The Helicase ATP-binding 2 domain occupies 1361 to 1538; that stretch reads TVLYNTSDNV…WIGASSCGVF (178 aa). 1374-1381 contributes to the ATP binding site; that stretch reads APTGSGKT. A DELH box motif is present at residues 1480 to 1483; it reads DELH. In terms of domain architecture, Helicase C-terminal 2 spans 1575–1772; the sequence is AIVQHAKNKK…NFNAEVVARV (198 aa). In terms of domain architecture, SEC63 2 spans 1840-2157; that stretch reads PLNLGMIASY…YLGCDQEYSF (318 aa).

Its subcellular location is the nucleus. The catalysed reaction is ATP + H2O = ADP + phosphate + H(+). In terms of biological role, RNA helicase that plays an essential role in pre-mRNA splicing as component of the U5 snRNP and U4/U6-U5 tri-snRNP complexes. Involved in spliceosome assembly, activation and disassembly. In Arabidopsis thaliana (Mouse-ear cress), this protein is DExH-box ATP-dependent RNA helicase DExH13.